The primary structure comprises 385 residues: Chaperone protein DnaJ (385 aa).

Positions 5 to 70 constitute a J domain; that stretch reads DFYDVLGVSR…QSRAAYDQFG (66 aa). The CR-type zinc-finger motif lies at 143 to 221; it reads GKKAQVRVPG…CHGAGRVEKE (79 aa). Zn(2+) contacts are provided by cysteine 156, cysteine 159, cysteine 173, cysteine 176, cysteine 195, cysteine 198, cysteine 209, and cysteine 212. CXXCXGXG motif repeat units follow at residues 156 to 163, 173 to 180, 195 to 202, and 209 to 216; these read CEVCTGTG, CPTCQGHG, CPTCHGRG, and CTNCHGAG.

It belongs to the DnaJ family. As to quaternary structure, homodimer. It depends on Zn(2+) as a cofactor.

The protein resides in the cytoplasm. Participates actively in the response to hyperosmotic and heat shock by preventing the aggregation of stress-denatured proteins and by disaggregating proteins, also in an autonomous, DnaK-independent fashion. Unfolded proteins bind initially to DnaJ; upon interaction with the DnaJ-bound protein, DnaK hydrolyzes its bound ATP, resulting in the formation of a stable complex. GrpE releases ADP from DnaK; ATP binding to DnaK triggers the release of the substrate protein, thus completing the reaction cycle. Several rounds of ATP-dependent interactions between DnaJ, DnaK and GrpE are required for fully efficient folding. Also involved, together with DnaK and GrpE, in the DNA replication of plasmids through activation of initiation proteins. This is Chaperone protein DnaJ from Parvibaculum lavamentivorans (strain DS-1 / DSM 13023 / NCIMB 13966).